We begin with the raw amino-acid sequence, 1616 residues long: MAYTQTATSSALLETVRGNNTLVNDLAKRRLYDTAVDEFNARDRRPKVNFSKVVSEEQTLIATKAYPEFQITFYNTQNAVHSLAGGLRSLELEYLMMQIPYGSLTYDIGGNFASHLFKGRAYVHCCMPNLDVRDIMRHEGQKDSIELYLSRLERGNKHVPNFQKEAFDRYAEMPNEVVCHDTFQTCRHSQECYTGRVYAIALHSIYDIPADEFGAALLRKNVHVCYAAFHFSENLLLEDSHVNLDEINACFQRDGDRLTFSFASESTLNYSHSYSNILKYVCKTYFPASNREVYMKEFLVTRVNTWFCKFSRIDTFLLYKGVAHKGVDNEQFYKAMEDAWHYKKTLAMCNSERILLEDSSSVNYWFPKMRDMVIVPLFDISLETSKRTRKEVLVSKDFVYTVLNHIRTYQAKALTYSNVLSFVESIRSRVIINGVTARSEWDVDKSLLQSLSMTFFLHTKLAVLKDDLLISKFALGPKTVSQHVWDEISLAFGNAFPSIKERLINRKLIKITENALEIRVPDLYVTFHDRLVSEYKMSVDMPVLDIRKKMEETEEMYNALSELSVLKTSDKFDVDVFSQMCQSLEVDPMTAAKVIVAVMSNESGLTLTFEQPTEANVALALQDSEKASDGALVVTSRDVEEPSIRGSMARGELQLAGLSGDVPESSYTRSEEIESLEQFHMATASSLIHKQMCSIVYTGPLKVQQMKNFIDSLVASLSAAVSNLVKILKDTAAIDLETRQKFGVLDVASKRWLVKPSAKNHAWGVVETHARKYHVALLEHDEFGIITCDNWRRVAVSSESVVYSDMAKLRTLRRLLKDGEPHVSSAKVVLVDGVPGCGKTKEILSRVNFEEDLILVPGRQAAEMIRRRANASGIIVATKDNVRTVDSFLMNYGKGARCQFKRLFIDEGLMLHTGCVNFLVEMSLCDIAYVYGDTQQIPYINRVTGFPYPAHFAKLEVDEVETRRTTLRCPADVTHFLNQRYEGHVMCTSSEKKSVSQEMVSGAASINPVSKPLKGKILTFTQSDKEALLSRGYADVHTVHEVQGETYADVSLVRLTPTPVSIIARDSPHVLVSLSRHTKSLKYYTVVMDPLVSIIRDLERVSSYLLDMYKVDAGTQXQLQVDSVFKNFNLFVAAPKTGDISDMQFYYDKCLPGNSTLLNNYDAVTMKLTDISLNVKDCILDMSKSVAAPKDVKPTLIPMVRTAAEMPRQTGLLENLVAMIKRNFNSPELSGVVDIENTASLVVDKFFDSYLLKEKRKPNKNFSLFSRESLNRWIAKQEQVTIGQLADFDFVDLPAVDQYRHMIKAQPKQKLDLSIQTEYPALQTIVYHSKKINAIFGPLFSELTRQLLDSIDSSRFLFFTRKTPAQIEDFFGDLDSHVPMDVLELDVSKYDKSQNEFHCAVEYEIWRRLGLEDFLAEVWKQGHRKTTLKDYTAGIKTCLWYQRKSGDVTTFIGNTVIIASCLASMLPMEKLIKGAFCGDDSLLYFPKGCEYPDIQQAANLMWNFEAKLFKKQYGYFCGRYVIHHDRGCIVYYDPLKLISKLGAKHIKDWDHLEEFRRSLCDVAESLNNCAYYTQLDDAVGEVHKTAPPGSFVYKSLVKYLSDKVLFRSLFLDGSSC.

Residues 50–458 (FSKVVSEEQT…QSLSMTFFLH (409 aa)) form a methyltransferase region. Residues 72–281 (TFYNTQNAVH…HSYSNILKYV (210 aa)) enclose the Alphavirus-like MT domain. Residues 801-963 (VVYSDMAKLR…KLEVDEVETR (163 aa)) form the (+)RNA virus helicase ATP-binding domain. Positions 830–1085 (LVDGVPGCGK…RHTKSLKYYT (256 aa)) are helicase. 833 to 840 (GVPGCGKT) provides a ligand contact to ATP. Residues 964–1116 (RTTLRCPADV…DMYKVDAGTQ (153 aa)) form the (+)RNA virus helicase C-terminal domain. In terms of domain architecture, RdRp catalytic spans 1380 to 1493 (MDVLELDVSK…YFPKGCEYPD (114 aa)).

It belongs to the ssRNA positive-strand viruses RNA-directed RNA polymerase family. Heterodimer of a large and a small subunit.

The catalysed reaction is RNA(n) + a ribonucleoside 5'-triphosphate = RNA(n+1) + diphosphate. The enzyme catalyses ATP + H2O = ADP + phosphate + H(+). Functionally, is an RNA-dependent RNA polymerase active in viral RNA replication. Is a methyltransferase active in RNA capping and an RNA helicase. Methyltransferase displays a cytoplasmic capping enzyme activity. This function is necessary since all viral RNAs are synthesized in the cytoplasm, and host capping enzymes are restricted to the nucleus. Helicase region probably exhibits NTPase and RNA unwinding activities (Potential). It also acts as a suppressor of RNA-mediated gene silencing, also known as post-transcriptional gene silencing (PTGS), a mechanism of plant viral defense that limits the accumulation of viral RNAs. May mediate silencing suppression through either inhibition of HEN1-mediated siRNA or siRNA demethylation. The sequence is that of Replicase large subunit from Antirrhinum majus (Garden snapdragon).